A 626-amino-acid polypeptide reads, in one-letter code: Lipid-A-disaccharide synthase (626 aa).

Residues 1 to 225 are unknown; that stretch reads MLPLYLVHVL…YKKSRLPKFH (225 aa). Residues 226–626 form a lipid-A-disaccharide synthase region; it reads SPSCFLSAGE…KEFHPKSSRA (401 aa).

This sequence in the C-terminal section; belongs to the LpxB family.

The enzyme catalyses a lipid X + a UDP-2-N,3-O-bis[(3R)-3-hydroxyacyl]-alpha-D-glucosamine = a lipid A disaccharide + UDP + H(+). Its pathway is bacterial outer membrane biogenesis; LPS lipid A biosynthesis. In terms of biological role, condensation of UDP-2,3-diacylglucosamine and 2,3-diacylglucosamine-1-phosphate to form lipid A disaccharide, a precursor of lipid A, a phosphorylated glycolipid that anchors the lipopolysaccharide to the outer membrane of the cell. In Chlamydia caviae (strain ATCC VR-813 / DSM 19441 / 03DC25 / GPIC) (Chlamydophila caviae), this protein is Lipid-A-disaccharide synthase (lpxB).